We begin with the raw amino-acid sequence, 290 residues long: Enoyl-CoA hydratase, mitochondrial (290 aa).

The N-terminal 29 residues, M1 to S29, are a transit peptide targeting the mitochondrion. Residue A98–K101 participates in substrate binding. 2 positions are modified to N6-acetyllysine; alternate: K101 and K115. 2 positions are modified to N6-succinyllysine; alternate: K101 and K115. A substrate-binding site is contributed by G141. Position 204 is an N6-succinyllysine (K204). An N6-acetyllysine modification is found at K211.

Belongs to the enoyl-CoA hydratase/isomerase family. As to quaternary structure, homohexamer; dimer of trimers. Detected in liver (at protein level).

It localises to the mitochondrion matrix. The enzyme catalyses a (3S)-3-hydroxyacyl-CoA = a (2E)-enoyl-CoA + H2O. It catalyses the reaction a (3E)-enoyl-CoA = a 4-saturated (2E)-enoyl-CoA. It carries out the reaction (3E)-hexenoyl-CoA = (2E)-hexenoyl-CoA. The catalysed reaction is (3S)-3-hydroxybutanoyl-CoA = (2E)-butenoyl-CoA + H2O. The enzyme catalyses 3-hydroxyisovaleryl-CoA = 3-methylbut-2-enoyl-CoA + H2O. It catalyses the reaction 3-hydroxypropanoyl-CoA = acryloyl-CoA + H2O. It carries out the reaction 3-hydroxybutanoyl-CoA = (2E)-butenoyl-CoA + H2O. The catalysed reaction is 2-methylpropenoyl-CoA + H2O = (S)-3-hydroxyisobutanoyl-CoA. The enzyme catalyses (3S)-hydroxyhexanoyl-CoA = (2E)-hexenoyl-CoA + H2O. It catalyses the reaction (3S)-hydroxydecanoyl-CoA = (2E)-decenoyl-CoA + H2O. The protein operates within lipid metabolism; fatty acid beta-oxidation. Functionally, converts unsaturated trans-2-enoyl-CoA species ((2E)-enoyl-CoA) to the corresponding 3(S)-3-hydroxyacyl-CoA species through addition of a water molecule to the double bond. Catalyzes the hydration of medium- and short-chained fatty enoyl-CoA thioesters from 4 carbons long (C4) up to C16. Has high substrate specificity for crotonyl-CoA ((2E)-butenoyl-CoA) and moderate specificity for acryloyl-CoA, 3-methylcrotonyl-CoA (3-methyl-(2E)-butenoyl-CoA) and methacrylyl-CoA ((2E)-2-methylpropenoyl-CoA). Can bind tiglyl-CoA (2-methylcrotonoyl-CoA), but hydrates only a small amount of this substrate. Plays a key role in the beta-oxidation spiral of short- and medium-chain fatty acid oxidation. At a lower rate than the hydratase reaction, catalyzes the isomerase reaction of trans-3-enoyl-CoA species (such as (3E)-hexenoyl-CoA) to trans-2-enoyl-CoA species (such as (2E)-hexenoyl-CoA), which are subsequently hydrated to 3(S)-3-hydroxyacyl-CoA species (such as (3S)-hydroxyhexanoyl-CoA). This chain is Enoyl-CoA hydratase, mitochondrial, found in Rattus norvegicus (Rat).